The sequence spans 545 residues: Arginine-containing cyclodipeptide synthase ateA (545 aa).

Residues 390–425 (GNQQTPTQSADMDSTVSHRQQQPASSRSYTSKQNQM) are compositionally biased toward polar residues. The segment at 390-433 (GNQQTPTQSADMDSTVSHRQQQPASSRSYTSKQNQMPRPLVISV) is disordered. Residues 434–438 (DDPSE) carry the Conserved DDXXE motif motif.

It belongs to the arginine-containing cyclodipeptide synthase family.

It carries out the reaction L-glutamyl-tRNA(Glu) + L-arginyl-tRNA(Arg) = cyclo(L-arginyl-L-glutamyl) + tRNA(Glu) + tRNA(Arg) + 2 H(+). Its pathway is secondary metabolite biosynthesis. Its function is as follows. Arginine-containing cyclodipeptide synthase; part of the cluster that mediates the biosynthesis of a highly modified cyclo-arginine-glutamate dipeptide (cRE). Within the pathway, ateA acts as the scaffold-generating enzyme and is responsible for formation of the cyclo-Arg-Glu diketopiperazine (cRW) from L-arginyl-tRNA(Arg) + L-glutamyl-tRNA(Glu). Additional enzymes from the cluster then further modify the cyclo-Arg-Glu diketopiperazine (cRW) scaffold. The protein is Arginine-containing cyclodipeptide synthase ateA of Aspergillus terreus.